The following is a 486-amino-acid chain: uncharacterized protein (486 aa).

The signal sequence occupies residues 1 to 25 (MGTMRSVYLIIIIILFFAFISLSFG). 2 stretches are compositionally biased toward basic and acidic residues: residues 306–316 (KKEEKENEESS) and 326–349 (KKEE…KQEK). The tract at residues 306-349 (KKEEKENEESSKTINQMQRHKKEEKSQTQETKKPSKNEMNKQEK) is disordered.

This is an uncharacterized protein from Methanocaldococcus jannaschii (strain ATCC 43067 / DSM 2661 / JAL-1 / JCM 10045 / NBRC 100440) (Methanococcus jannaschii).